The primary structure comprises 830 residues: Phenylalanine--tRNA ligase beta subunit (830 aa).

Residues Gly-39 to Pro-158 form the tRNA-binding domain. The 76-residue stretch at Pro-417–Glu-492 folds into the B5 domain. Mg(2+)-binding residues include Asp-470, Asp-476, Glu-479, and Glu-480. A disordered region spans residues Ile-490–Thr-510. Positions Ser-736–Arg-828 constitute an FDX-ACB domain.

The protein belongs to the phenylalanyl-tRNA synthetase beta subunit family. Type 1 subfamily. In terms of assembly, tetramer of two alpha and two beta subunits. Mg(2+) is required as a cofactor.

The protein resides in the cytoplasm. It catalyses the reaction tRNA(Phe) + L-phenylalanine + ATP = L-phenylalanyl-tRNA(Phe) + AMP + diphosphate + H(+). In Salinibacter ruber (strain DSM 13855 / M31), this protein is Phenylalanine--tRNA ligase beta subunit.